The following is a 61-amino-acid chain: Small ribosomal subunit protein uS14B (61 aa).

Residues cysteine 24, cysteine 27, cysteine 40, and cysteine 43 each coordinate Zn(2+).

The protein belongs to the universal ribosomal protein uS14 family. Zinc-binding uS14 subfamily. In terms of assembly, part of the 30S ribosomal subunit. Contacts proteins S3 and S10. Requires Zn(2+) as cofactor.

In terms of biological role, binds 16S rRNA, required for the assembly of 30S particles and may also be responsible for determining the conformation of the 16S rRNA at the A site. This chain is Small ribosomal subunit protein uS14B, found in Saccharopolyspora erythraea (strain ATCC 11635 / DSM 40517 / JCM 4748 / NBRC 13426 / NCIMB 8594 / NRRL 2338).